A 145-amino-acid polypeptide reads, in one-letter code: ATP synthase epsilon chain (145 aa).

Belongs to the ATPase epsilon chain family. As to quaternary structure, F-type ATPases have 2 components, CF(1) - the catalytic core - and CF(0) - the membrane proton channel. CF(1) has five subunits: alpha(3), beta(3), gamma(1), delta(1), epsilon(1). CF(0) has three main subunits: a, b and c.

The protein resides in the cell inner membrane. Functionally, produces ATP from ADP in the presence of a proton gradient across the membrane. The polypeptide is ATP synthase epsilon chain (Francisella tularensis subsp. mediasiatica (strain FSC147)).